Reading from the N-terminus, the 510-residue chain is Glycogen synthase (510 aa).

Residue Lys-18 participates in ADP-alpha-D-glucose binding.

Belongs to the glycosyltransferase 1 family. Bacterial/plant glycogen synthase subfamily.

It carries out the reaction [(1-&gt;4)-alpha-D-glucosyl](n) + ADP-alpha-D-glucose = [(1-&gt;4)-alpha-D-glucosyl](n+1) + ADP + H(+). The protein operates within glycan biosynthesis; glycogen biosynthesis. Functionally, synthesizes alpha-1,4-glucan chains using ADP-glucose. This Bordetella parapertussis (strain 12822 / ATCC BAA-587 / NCTC 13253) protein is Glycogen synthase.